The sequence spans 208 residues: N-(5'-phosphoribosyl)anthranilate isomerase (208 aa).

The protein belongs to the TrpF family.

The catalysed reaction is N-(5-phospho-beta-D-ribosyl)anthranilate = 1-(2-carboxyphenylamino)-1-deoxy-D-ribulose 5-phosphate. Its pathway is amino-acid biosynthesis; L-tryptophan biosynthesis; L-tryptophan from chorismate: step 3/5. The protein is N-(5'-phosphoribosyl)anthranilate isomerase of Staphylococcus haemolyticus (strain JCSC1435).